A 240-amino-acid polypeptide reads, in one-letter code: REF/SRPP-like protein At1g67360 (240 aa).

Positions K208–E240 are disordered.

The protein belongs to the REF/SRPP family.

The chain is REF/SRPP-like protein At1g67360 from Arabidopsis thaliana (Mouse-ear cress).